The following is a 188-amino-acid chain: dCTP deaminase (188 aa).

DCTP contacts are provided by residues 111 to 116, 135 to 137, Q156, Y170, and Q180; these read KSTYAR and TLE. The active-site Proton donor/acceptor is E137.

This sequence belongs to the dCTP deaminase family. In terms of assembly, homotrimer.

The catalysed reaction is dCTP + H2O + H(+) = dUTP + NH4(+). It participates in pyrimidine metabolism; dUMP biosynthesis; dUMP from dCTP (dUTP route): step 1/2. Functionally, catalyzes the deamination of dCTP to dUTP. The sequence is that of dCTP deaminase from Marinobacter nauticus (strain ATCC 700491 / DSM 11845 / VT8) (Marinobacter aquaeolei).